The chain runs to 361 residues: UDP-N-acetylglucosamine--N-acetylmuramyl-(pentapeptide) pyrophosphoryl-undecaprenol N-acetylglucosamine transferase (361 aa).

UDP-N-acetyl-alpha-D-glucosamine is bound by residues 21 to 23 (TGG), asparagine 131, arginine 172, serine 195, isoleucine 250, and glutamine 295.

The protein belongs to the glycosyltransferase 28 family. MurG subfamily.

The protein localises to the cell inner membrane. The enzyme catalyses di-trans,octa-cis-undecaprenyl diphospho-N-acetyl-alpha-D-muramoyl-L-alanyl-D-glutamyl-meso-2,6-diaminopimeloyl-D-alanyl-D-alanine + UDP-N-acetyl-alpha-D-glucosamine = di-trans,octa-cis-undecaprenyl diphospho-[N-acetyl-alpha-D-glucosaminyl-(1-&gt;4)]-N-acetyl-alpha-D-muramoyl-L-alanyl-D-glutamyl-meso-2,6-diaminopimeloyl-D-alanyl-D-alanine + UDP + H(+). It participates in cell wall biogenesis; peptidoglycan biosynthesis. Functionally, cell wall formation. Catalyzes the transfer of a GlcNAc subunit on undecaprenyl-pyrophosphoryl-MurNAc-pentapeptide (lipid intermediate I) to form undecaprenyl-pyrophosphoryl-MurNAc-(pentapeptide)GlcNAc (lipid intermediate II). The sequence is that of UDP-N-acetylglucosamine--N-acetylmuramyl-(pentapeptide) pyrophosphoryl-undecaprenol N-acetylglucosamine transferase from Solibacter usitatus (strain Ellin6076).